The chain runs to 185 residues: uncharacterized protein (185 aa).

The N-terminal stretch at 1 to 18 (MLLKLILILCFLVTLSLS) is a signal peptide. Residues 30–185 (TQGPTIASGG…VQDCGEITGW (156 aa)) are disordered. Residues 86–101 (RAQEGGKKDTTKEQPK) are compositionally biased toward basic and acidic residues. Over residues 103–116 (NNNNKNLGRHSSSG) the composition is skewed to low complexity. Over residues 117 to 135 (SGSGSGSGCGVTGDTGTGS) the composition is skewed to gly residues.

The protein localises to the secreted. This is an uncharacterized protein from Dictyostelium discoideum (Social amoeba).